We begin with the raw amino-acid sequence, 460 residues long: EPD1-interacting receptor-like cytoplasmic serine/threonine-protein kinase 5D (460 aa).

The Protein kinase domain occupies 83–364 (FSSANFLGEG…DVVNILEPLL (282 aa)). Residues 89-97 (LGEGGFGPV) and Lys-118 each bind ATP. 2 positions are modified to phosphotyrosine: Tyr-163 and Tyr-165. Asp-213 serves as the catalytic Proton acceptor.

This sequence belongs to the protein kinase superfamily. Ser/Thr protein kinase family. Interacts with the V.dahliae elicitor EPD1 (AC G2WWH6). Post-translationally, phosphorylated at Tyr-163 and Tyr-165 in the presence of pathogen-associated molecular patterns (PAMPs); this triggers the expression of pathogenesis-related genes. Mostly expressed in roots and, to a lesser extent, in leaves.

The protein localises to the cell membrane. The enzyme catalyses L-seryl-[protein] + ATP = O-phospho-L-seryl-[protein] + ADP + H(+). The catalysed reaction is L-threonyl-[protein] + ATP = O-phospho-L-threonyl-[protein] + ADP + H(+). Functionally, required for pathogen-associated molecular pattern (PAMP, e.g. chitin and flg22)-triggered immunity (PTI) involving reactive oxygen species (ROS) accumulation and triggering plant defense, including defense-related gene expression (e.g. PR1 and LOX). Ensures specific recognition of the EPD1 effector of Verticillium dahliae, resulting in a hypersensitive response known as effector-triggered immunity (ETI), characterized by the activation of programmed cell death to limit infection by the pathogen. Priming plants with the incompatible pathogen V.dahliae leads to an increased resistance to compatible pathogens, as a result of systemic acquired resistance (SAR). This is EPD1-interacting receptor-like cytoplasmic serine/threonine-protein kinase 5D from Gossypium barbadense (Sea Island cotton).